The sequence spans 118 residues: Small ribosomal subunit protein uS13 (118 aa).

Positions 94 to 118 (GLPVRGQRTKTNARTRKGPCKPIKK) are disordered.

The protein belongs to the universal ribosomal protein uS13 family. Part of the 30S ribosomal subunit. Forms a loose heterodimer with protein S19. Forms two bridges to the 50S subunit in the 70S ribosome.

Its function is as follows. Located at the top of the head of the 30S subunit, it contacts several helices of the 16S rRNA. In the 70S ribosome it contacts the 23S rRNA (bridge B1a) and protein L5 of the 50S subunit (bridge B1b), connecting the 2 subunits; these bridges are implicated in subunit movement. Contacts the tRNAs in the A and P-sites. This Salmonella typhi protein is Small ribosomal subunit protein uS13.